Here is a 633-residue protein sequence, read N- to C-terminus: Biosynthetic arginine decarboxylase (633 aa).

N6-(pyridoxal phosphate)lysine is present on lysine 101. Position 284 to 294 (284 to 294 (VDVGGGLGVDY)) interacts with substrate.

The protein belongs to the Orn/Lys/Arg decarboxylase class-II family. SpeA subfamily. It depends on Mg(2+) as a cofactor. Pyridoxal 5'-phosphate serves as cofactor.

The catalysed reaction is L-arginine + H(+) = agmatine + CO2. It functions in the pathway amine and polyamine biosynthesis; agmatine biosynthesis; agmatine from L-arginine: step 1/1. Functionally, catalyzes the biosynthesis of agmatine from arginine. In Aeromonas hydrophila subsp. hydrophila (strain ATCC 7966 / DSM 30187 / BCRC 13018 / CCUG 14551 / JCM 1027 / KCTC 2358 / NCIMB 9240 / NCTC 8049), this protein is Biosynthetic arginine decarboxylase.